A 913-amino-acid polypeptide reads, in one-letter code: Vacuolar membrane protease (913 aa).

Residues 1–15 are Cytoplasmic-facing; that stretch reads MMANYFRSTFKFRKT. A helical transmembrane segment spans residues 16–36; sequence TVSTLFVLTVLVISILTWFDA. At 37–364 the chain is on the vacuolar side; that stretch reads NKYKSNLPDD…FFVVSARQLY (328 aa). Residue Asn117 is glycosylated (N-linked (GlcNAc...) asparagine). Positions 152 and 164 each coordinate Zn(2+). The active-site Proton acceptor is Glu196. Zn(2+) is bound by residues Glu197, Glu222, and His296. The helical transmembrane segment at 365–385 threads the bilayer; the sequence is VWNIVLLCVLPITLILLRIVC. Over 386 to 394 the chain is Cytoplasmic; it reads NKLGTWRMP. A helical transmembrane segment spans residues 395–415; it reads TSALFTRIPFALFVSSFTIYF. Residues 416–431 lie on the Vacuolar side of the membrane; sequence TKELLLQLNPTIWSRN. The chain crosses the membrane as a helical span at residues 432–452; sequence FILPFLFCISEFLLINTLVLA. Residues 453–465 lie on the Cytoplasmic side of the membrane; sequence LFEYLWPIQDFKT. A helical membrane pass occupies residues 466-486; that stretch reads LSLLELSAIAWLFLLKCTWDL. The Vacuolar segment spans residues 487–494; it reads SSSGFKAT. Residues 495–515 traverse the membrane as a helical segment; the sequence is GVYPVTVFYLFISLASMFGLC. Topologically, residues 516–600 are cytoplasmic; it reads SMCFGKRPNA…TLNYDWSAQY (85 aa). Basic and acidic residues predominate over residues 540 to 552; that stretch reads NDTHSIECPRQPE. A disordered region spans residues 540–578; it reads NDTHSIECPRQPEDSETTETSPLINTPSSSVQSSPIASS. Positions 557–566 are enriched in polar residues; the sequence is TETSPLINTP. Residues 567–578 show a composition bias toward low complexity; sequence SSSVQSSPIASS. Residues 601 to 621 form a helical membrane-spanning segment; the sequence is LLAVPINAFLIWESLFNLFDA. Residues 622-634 lie on the Vacuolar side of the membrane; the sequence is LSMTVQESNKATE. The chain crosses the membrane as a helical span at residues 635–655; that stretch reads AVFKFAIYGAIFLCSPLLPFT. Over 656–660 the chain is Cytoplasmic; that stretch reads TKLNR. Residues 661–681 traverse the membrane as a helical segment; that stretch reads FVVIILGVVTILAASFSLFAA. Residues 682–913 are Vacuolar-facing; it reads PYTELAPLKL…MVTIHKYLEL (232 aa). Asn729, Asn794, and Asn810 each carry an N-linked (GlcNAc...) asparagine glycan.

Belongs to the peptidase M28 family. Zn(2+) is required as a cofactor.

The protein resides in the vacuole membrane. May be involved in vacuolar sorting and osmoregulation. The protein is Vacuolar membrane protease of Kluyveromyces lactis (strain ATCC 8585 / CBS 2359 / DSM 70799 / NBRC 1267 / NRRL Y-1140 / WM37) (Yeast).